We begin with the raw amino-acid sequence, 120 residues long: Fluoride-specific ion channel FluC (120 aa).

The next 3 helical transmembrane spans lie at 30 to 50 (FGTL…YGLL), 66 to 86 (VGFL…LLLL), and 96 to 116 (LNII…LQLV). Residues glycine 70 and threonine 73 each coordinate Na(+).

This sequence belongs to the fluoride channel Fluc/FEX (TC 1.A.43) family.

It is found in the cell inner membrane. It catalyses the reaction fluoride(in) = fluoride(out). Na(+) is not transported, but it plays an essential structural role and its presence is essential for fluoride channel function. Fluoride-specific ion channel. Important for reducing fluoride concentration in the cell, thus reducing its toxicity. The chain is Fluoride-specific ion channel FluC from Pseudoalteromonas translucida (strain TAC 125).